We begin with the raw amino-acid sequence, 396 residues long: Probable mannan endo-1,4-beta-mannosidase A-2 (396 aa).

Residues 1–21 (MKVPRLLLALGGLASIHIASA) form the signal peptide. W99 is a binding site for substrate. N-linked (GlcNAc...) asparagine glycosylation occurs at N120. A substrate-binding site is contributed by N212. Residue E213 is the Proton donor of the active site. A glycan (N-linked (GlcNAc...) asparagine) is linked at N270. Y288 contacts substrate. The Nucleophile role is filled by E321. W351 lines the substrate pocket.

This sequence belongs to the glycosyl hydrolase 5 (cellulase A) family.

The protein localises to the secreted. The enzyme catalyses Random hydrolysis of (1-&gt;4)-beta-D-mannosidic linkages in mannans, galactomannans and glucomannans.. Its function is as follows. Endo-1,4-mannanase, a crucial enzyme for depolymerization of seed galactomannans and wood galactoglucomannans. The polypeptide is Probable mannan endo-1,4-beta-mannosidase A-2 (manA-2) (Aspergillus terreus (strain NIH 2624 / FGSC A1156)).